Here is a 63-residue protein sequence, read N- to C-terminus: Large ribosomal subunit protein uL29 (63 aa).

Belongs to the universal ribosomal protein uL29 family.

The protein is Large ribosomal subunit protein uL29 of Chromohalobacter salexigens (strain ATCC BAA-138 / DSM 3043 / CIP 106854 / NCIMB 13768 / 1H11).